We begin with the raw amino-acid sequence, 73 residues long: Large ribosomal subunit protein bL27c (73 aa).

This sequence belongs to the bacterial ribosomal protein bL27 family.

Its subcellular location is the plastid. The protein resides in the chloroplast. The sequence is that of Large ribosomal subunit protein bL27c (rpl27) from Haptolina hirta (Plankton alga).